Consider the following 476-residue polypeptide: Transposase for transposon Tn5 (476 aa).

Residues 1–70 (MITSALHRAA…YRFIRNPNVS (70 aa)) are interaction with DNA. The Mg(2+) site is built by Asp97 and Asp188. Interaction with DNA stretches follow at residues 237–255 (YQIS…KRKN) and 319–348 (YTHR…EPDN). Position 326 (Glu326) interacts with Mg(2+). The interval 369–476 (SFTLPQALRA…KDLMAQGIKI (108 aa)) is important for dimerization.

Belongs to the transposase 11 family. In terms of assembly, monomer. Homodimer of tnp (isoform 1), and heterodimer of tnp (isoform 1) and inh (isoform 2). Mg(2+) serves as cofactor.

Its function is as follows. Mediates transposition of transposon Tn5 by a 'cut and paste' mechanism. First, the monomeric transposase binds the 19 bp inverted DNA repeats flanking the transposon. Then, dimerization of the DNA-bound transposase creates a synaptic DNA complex. After nicking of the first DNA strand, excision of the transposon proceeds through a series of intermediates. The transposase then mediates the insertion of the transposon at a new site by strand transfer. The activity of the wild-type transposase is very low, and is further inhibited by dimerization with the transposase inhibitor (inh). The chain is Transposase for transposon Tn5 (tnpA) from Escherichia coli.